The following is a 141-amino-acid chain: Hemoglobin subunit alpha-A (141 aa).

The Globin domain occupies 1-141; that stretch reads VLSASDKTNV…VAKELTAKYR (141 aa). His58 contacts O2. His87 lines the heme b pocket.

It belongs to the globin family. As to quaternary structure, heterotetramer of two alpha chains and two beta chains. In terms of tissue distribution, red blood cells.

Functionally, involved in oxygen transport from the lung to the various peripheral tissues. The sequence is that of Hemoglobin subunit alpha-A (HBAA) from Phalacrocorax carbo (Great cormorant).